We begin with the raw amino-acid sequence, 97 residues long: Cytochrome c2 iso-2 (97 aa).

Residues C10, C13, H14, and M75 each contribute to the heme c site.

Belongs to the cytochrome c family. In terms of processing, binds 1 heme c group covalently per subunit.

Cytochrome c2 is found mainly in purple, non-sulfur, photosynthetic bacteria where it functions as the electron donor to the oxidized bacteriochlorophyll in the photophosphorylation pathway. However, it may also have a role in the respiratory chain and is found in some non-photosynthetic bacteria. This Magnetospirillum molischianum (Rhodospirillum molischianum) protein is Cytochrome c2 iso-2.